The sequence spans 284 residues: D-tagatose-1,6-bisphosphate aldolase subunit GatY (284 aa).

Aspartate 82 (proton donor) is an active-site residue. The Zn(2+) site is built by histidine 83 and histidine 180. Position 181 (glycine 181) interacts with dihydroxyacetone phosphate. Zn(2+) is bound at residue histidine 208. Dihydroxyacetone phosphate contacts are provided by residues 209–211 (GAS) and 230–233 (NVAT).

It belongs to the class II fructose-bisphosphate aldolase family. TagBP aldolase GatY subfamily. In terms of assembly, forms a complex with GatZ. Zn(2+) serves as cofactor.

It carries out the reaction D-tagatofuranose 1,6-bisphosphate = D-glyceraldehyde 3-phosphate + dihydroxyacetone phosphate. Its pathway is carbohydrate metabolism; D-tagatose 6-phosphate degradation; D-glyceraldehyde 3-phosphate and glycerone phosphate from D-tagatose 6-phosphate: step 2/2. Catalytic subunit of the tagatose-1,6-bisphosphate aldolase GatYZ, which catalyzes the reversible aldol condensation of dihydroxyacetone phosphate (DHAP or glycerone-phosphate) with glyceraldehyde 3-phosphate (G3P) to produce tagatose 1,6-bisphosphate (TBP). Requires GatZ subunit for full activity and stability. Is involved in the catabolism of galactitol. The sequence is that of D-tagatose-1,6-bisphosphate aldolase subunit GatY from Escherichia coli O7:K1 (strain IAI39 / ExPEC).